The following is a 537-amino-acid chain: Sodium/hydrogen exchanger 9B2 (537 aa).

The span at 1-10 (MGDEDKRITY) shows a compositional bias: basic and acidic residues. The tract at residues 1-33 (MGDEDKRITYEDSEPSTGMNYTPSMHQETQEET) is disordered. The Cytoplasmic segment spans residues 1-86 (MGDEDKRITY…ACPPHGLLDR (86 aa)). Over residues 15–27 (PSTGMNYTPSMHQ) the composition is skewed to polar residues. At S49 the chain carries Phosphoserine. Residues 87–104 (VVTNVTIIVLLWAVIWSI) form a helical membrane-spanning segment. Over 105-113 (TGSECLPGG) the chain is Extracellular. Residues 114–133 (NLFGIIILFYCAIIGGKLLG) traverse the membrane as a helical segment. Topologically, residues 134–144 (LIKLPTLPPLP) are cytoplasmic. A helical membrane pass occupies residues 145-161 (SLLGMLLAGFLIRNIPV). Over 162 to 171 (INDNVQIKHK) the chain is Extracellular. Residues 172 to 189 (WSSSLRSIALSIILVRAG) traverse the membrane as a helical segment. The Cytoplasmic portion of the chain corresponds to 190 to 200 (LGLDSKALKKL). The chain crosses the membrane as a helical span at residues 201–227 (KGVCVRLSMGPCIVEACTSALLAHYLL). The Extracellular portion of the chain corresponds to 228–233 (GLPWQW). Residues 234–242 (GFILGFVLG) traverse the membrane as a helical segment. The Cytoplasmic segment spans residues 243–270 (AVSPAVVVPSMLLLQGGGYGVEKGVPTL). Positions 244, 275, 278, and 279 each coordinate Na(+). A helical membrane pass occupies residues 271-290 (LMAAGSFDDILAITGFNTCL). Residues 291–300 (GIAFSTGSTV) are Extracellular-facing. A helical transmembrane segment spans residues 301 to 324 (FNVLRGVLEVVIGVATGSVLGFFI). Over 325–339 (QYFPSCDQDKLVCKR) the chain is Cytoplasmic. A helical membrane pass occupies residues 340–357 (TFLVLGLSVLAVFSSVHF). The Extracellular portion of the chain corresponds to 358–361 (GFPG). Residues 362 to 373 (SGGLCTLVMAFL) form a helical membrane-spanning segment. Residues 374 to 390 (AGMGWTSEKAEVEKIIA) lie on the Cytoplasmic side of the membrane. The helical transmembrane segment at 391–411 (VAWDIFQPLLFGLIGAEVSIA) threads the bilayer. At 412 to 417 (SLRPET) the chain is on the extracellular side. Residues 418–440 (VGLCVATVGIAVLIRILTTFLMV) traverse the membrane as a helical segment. Over 441–461 (CFAGFNLKEKIFISFAWLPKA) the chain is Cytoplasmic. A helical membrane pass occupies residues 462 to 473 (TVQAAIGSVALD). Residues 474–486 (TARSHGEKQLEDY) lie on the Extracellular side of the membrane. A helical membrane pass occupies residues 487–509 (GMDVLTVAFLSILITAPIGSLLI). Over 510–537 (GLLGPRLLQKVEHQNKDEEVQGETSVQV) the chain is Cytoplasmic.

This sequence belongs to the monovalent cation:proton antiporter 1 (CPA1) transporter (TC 2.A.36) family. In terms of assembly, homodimer; dimerization is essential for SLC9B2 activity. Lipids seem to play a role in the stabilization of the dimerization subdomain.

Its subcellular location is the cell membrane. It is found in the mitochondrion membrane. It localises to the endosome membrane. The protein localises to the recycling endosome membrane. The protein resides in the cytoplasmic vesicle. Its subcellular location is the secretory vesicle. It is found in the synaptic vesicle membrane. It localises to the basolateral cell membrane. The protein localises to the apical cell membrane. It catalyses the reaction Li(+)(out) + H(+)(in) = Li(+)(in) + H(+)(out). The catalysed reaction is Li(+)(in) + Na(+)(out) = Li(+)(out) + Na(+)(in). It carries out the reaction Na(+)(in) + H(+)(out) = Na(+)(out) + H(+)(in). Its activity is regulated as follows. Allosterically inhibited by the N-terminal domain. Inhibited by phloretin. Electroneutral Na(+) Li(+)/H(+) antiporter that extrudes Na(+) or Li(+) in exchange for external protons across the membrane. Uses the proton gradient/membrane potential to extrude sodium. Contributes to the regulation of intracellular pH and sodium homeostasis. Also able to mediate Na(+)/Li(+) antiporter activity in kidney. May play a physiological role in renal tubular function and blood pressure homeostasis. Plays an important role for insulin secretion and clathrin-mediated endocytosis in beta-cells. Involved in sperm motility and fertility. It is controversial whether SLC9B2 plays a role in osteoclast differentiation or not. The protein is Sodium/hydrogen exchanger 9B2 (SLC9B2) of Pongo abelii (Sumatran orangutan).